A 369-amino-acid chain; its full sequence is Mitogen-activated protein kinase 5 (369 aa).

The Protein kinase domain occupies 36–322 (QPPIMPIGRG…VEEALDHPYL (287 aa)). Residues 42–50 (IGRGAYGIV) and K65 each bind ATP. D162 acts as the Proton acceptor in catalysis. T194 is subject to Phosphothreonine. Residues 194-196 (TEY) carry the TXY motif. Position 196 is a phosphotyrosine (Y196).

The protein belongs to the protein kinase superfamily. CMGC Ser/Thr protein kinase family. MAP kinase subfamily. In terms of assembly, interacts with MKK1. In terms of processing, dually phosphorylated on Thr-194 and Tyr-196, which activates the enzyme.

It catalyses the reaction L-seryl-[protein] + ATP = O-phospho-L-seryl-[protein] + ADP + H(+). The catalysed reaction is L-threonyl-[protein] + ATP = O-phospho-L-threonyl-[protein] + ADP + H(+). Activated by threonine and tyrosine phosphorylation. In terms of biological role, involved in disease resistance and abiotic stress tolerance signaling pathways. The chain is Mitogen-activated protein kinase 5 (MPK5) from Oryza sativa subsp. indica (Rice).